The chain runs to 346 residues: Cyclin-dependent kinase 7 (346 aa).

At Ala2 the chain carries N-acetylalanine. Ser7 carries the phosphoserine modification. The region spanning 12 to 295 is the Protein kinase domain; that stretch reads YEKLDFLGEG…ASQALKTKYF (284 aa). ATP is bound by residues 18–26 and Lys41; that span reads LGEGQFATV. The active-site Proton acceptor is the Asp137. Phosphoserine; by CDK1 and CDK2 is present on Ser164. At Thr170 the chain carries Phosphothreonine; by CDK2.

It belongs to the protein kinase superfamily. CMGC Ser/Thr protein kinase family. CDC2/CDKX subfamily. As to quaternary structure, associates primarily with cyclin-H (CCNH) and MAT1 to form the CAK complex. CAK can further associate with the core-TFIIH to form the TFIIH basal transcription factor; this complex is sensitive to UV light. The CAK complex binds to p53/TP53 in response to DNA damage. Interacts with CDK2, SF1/NR5A1, PUF60 and PRKCI. Interacts with HINT1. Post-translationally, phosphorylation of Ser-164 during mitosis inactivates the enzyme. Phosphorylation of Thr-170 is required for activity. Phosphorylated at Ser-164 and Thr-170 by CDK2.

It localises to the nucleus. It is found in the cytoplasm. Its subcellular location is the perinuclear region. The enzyme catalyses L-seryl-[protein] + ATP = O-phospho-L-seryl-[protein] + ADP + H(+). It catalyses the reaction L-threonyl-[protein] + ATP = O-phospho-L-threonyl-[protein] + ADP + H(+). The catalysed reaction is [DNA-directed RNA polymerase] + ATP = phospho-[DNA-directed RNA polymerase] + ADP + H(+). Its activity is regulated as follows. Phosphorylation at Thr-170 is required for enzymatic activity. The association of p53/TP53 to the CAK complex in response to DNA damage reduces kinase activity toward CDK2 and RNA polymerase II repetitive C-terminal domain (CTD), thus stopping cell cycle progression. Functionally, serine/threonine kinase involved in cell cycle control and in RNA polymerase II-mediated RNA transcription. Cyclin-dependent kinases (CDKs) are activated by the binding to a cyclin and mediate the progression through the cell cycle. Each different complex controls a specific transition between 2 subsequent phases in the cell cycle. Required for both activation and complex formation of CDK1/cyclin-B during G2-M transition, and for activation of CDK2/cyclins during G1-S transition (but not complex formation). CDK7 is the catalytic subunit of the CDK-activating kinase (CAK) complex. Phosphorylates SPT5/SUPT5H, SF1/NR5A1, POLR2A, p53/TP53, CDK1, CDK2, CDK4, CDK6 and CDK11B/CDK11. Initiates transcription by RNA polymerase II by mediating phosphorylation of POLR2A at 'Ser-5' of the repetitive C-terminal domain (CTD) when POLR2A is in complex with DNA, promoting dissociation from DNA and initiation. CAK activates the cyclin-associated kinases CDK1, CDK2, CDK4 and CDK6 by threonine phosphorylation, thus regulating cell cycle progression. CAK complexed to the core-TFIIH basal transcription factor activates RNA polymerase II by serine phosphorylation of the CTD of POLR2A, allowing its escape from the promoter and elongation of the transcripts. Its expression and activity are constant throughout the cell cycle. Upon DNA damage, triggers p53/TP53 activation by phosphorylation, but is inactivated in turn by p53/TP53; this feedback loop may lead to an arrest of the cell cycle and of the transcription, helping in cell recovery, or to apoptosis. Required for DNA-bound peptides-mediated transcription and cellular growth inhibition. This Mus musculus (Mouse) protein is Cyclin-dependent kinase 7 (Cdk7).